A 548-amino-acid polypeptide reads, in one-letter code: Aspergilol synthase AuAP450 (548 aa).

Residues 38-58 (PQLVITTLGALLLAAFYLLPS) form a helical membrane-spanning segment. Residue C489 coordinates heme.

It belongs to the cytochrome P450 family. The cofactor is heme.

The protein resides in the membrane. The protein operates within secondary metabolite biosynthesis; terpenoid biosynthesis. Functionally, cytochrome P450 monooxygenase; part of the gene cluster that mediates the biosynthesis of aspergiltriene A, aspergildienes A-D and aspergilols A-D. The bifunctional terpene synthase AuAS converts DMAPP and IPP into sesterterpenes. The C-terminal prenyltransferase (PT) domain of AuAS catalyzes formation of GFPP, whereas the N-terminal terpene cyclase (TC) domain catalyzes the cyclization of GFPP into 5 distinct sesterterpenes: aspergiltriene A, aspergildiene A, aspergildiene B, aspergildiene C and aspergildiene D. The cytochrome P450 monooxygenase AP450 then hydroxylates the aspergildienes A, B, C and D to yield the corresponding sesterterpene alcohols, aspergilols A-D. The polypeptide is Aspergilol synthase AuAP450 (Aspergillus ustus).